We begin with the raw amino-acid sequence, 894 residues long: Probable ion channel SYM8 (894 aa).

Positions 1–124 (MAKSNEEPNS…PPSLPIAITK (124 aa)) are disordered. Composition is skewed to polar residues over residues 7 to 16 (EPNSNLNTNK), 24 to 33 (TLAQQPSLNL), and 44 to 63 (IGNS…QRNY). Helical transmembrane passes span 134-154 (SPIF…SAFL), 204-224 (TISL…YKYI), 267-287 (LALL…LYAV), and 319-339 (IVSV…LGLV). 2 consecutive RCK N-terminal domains span residues 360 to 501 (RNHV…ETVV) and 620 to 769 (PEKI…DKSI). Positions 390–415 (VIVVLAEKEKEEMEMDIAKLEFDFMG) form a coiled coil.

Belongs to the castor/pollux (TC 1.A.1.23) family. As to quaternary structure, homotetramer.

The protein localises to the nucleus membrane. Required for both rhizobial and mycorrhizal symbiosis. Involved in Nod-factor-induced calcium spiking. May induce a change in membrane polarization that activates the opening of a calcium channel required for calcium spiking. Might be calcium gated. This is Probable ion channel SYM8 (SYM8) from Pisum sativum (Garden pea).